The following is a 1036-amino-acid chain: ADAMTS-like protein 4 (1036 aa).

The N-terminal stretch at 1–24 is a signal peptide; sequence MESWLGRLWLCMMLLLPLPQPCQD. One can recognise a TSP type-1 1 domain in the interval 47 to 91; that stretch reads GPWGRWASCSQPCGVGVQRRSRTCELHPALPLPPRPPRHPEAHRP. 2 disordered regions span residues 73–149 and 163–308; these read HPAL…IKPG and HRSR…WLPL. The segment covering 163–173 has biased composition (basic residues); it reads HRSRRHPHRPG. Over residues 215–253 the composition is skewed to polar residues; it reads TPRSGTAQTEVLPRTSSAPSYTGTPAPTSSFGDSRSFQG. 2 N-linked (GlcNAc...) asparagine glycosylation sites follow: asparagine 454 and asparagine 737. TSP type-1 domains lie at 687 to 748, 750 to 804, 805 to 871, 872 to 931, and 932 to 988; these read CPPY…HLCG, WEIS…DMGP, CTTA…GPCE, RTWR…QGQA, and CEDK…QPCN. Residues 991 to 1028 enclose the PLAC domain; it reads PDDQCKDSSPHCPLVVQARLCVYPYYTTTCCRSCAHVL.

In terms of assembly, interacts with CTSB. Interacts with FBN1. In terms of processing, glycosylated. Can be O-fucosylated by POFUT2 on a serine or a threonine residue found within the consensus sequence C1-X(2)-(S/T)-C2-G of the TSP type-1 repeat domains where C1 and C2 are the first and second cysteine residue of the repeat, respectively. Fucosylated repeats can then be further glycosylated by the addition of a beta-1,3-glucose residue by the glucosyltransferase, B3GALTL. Fucosylation mediates the efficient secretion of ADAMTS family members. Can also be C-glycosylated with one or two mannose molecules on tryptophan residues within the consensus sequence W-X-X-W of the TPRs, and N-glycosylated. These other glycosylations can also facilitate secretion. As to expression, widely expressed in a range of tissues. Especially prevalent in brain, spinal cord, muscle, lung and heart.

The protein localises to the secreted. It is found in the extracellular space. The protein resides in the extracellular matrix. In terms of biological role, positive regulation of apoptosis. May facilitate FBN1 microfibril biogenesis. The protein is ADAMTS-like protein 4 of Mus musculus (Mouse).